A 154-amino-acid chain; its full sequence is SsrA-binding protein (154 aa).

The protein belongs to the SmpB family.

The protein resides in the cytoplasm. Functionally, required for rescue of stalled ribosomes mediated by trans-translation. Binds to transfer-messenger RNA (tmRNA), required for stable association of tmRNA with ribosomes. tmRNA and SmpB together mimic tRNA shape, replacing the anticodon stem-loop with SmpB. tmRNA is encoded by the ssrA gene; the 2 termini fold to resemble tRNA(Ala) and it encodes a 'tag peptide', a short internal open reading frame. During trans-translation Ala-aminoacylated tmRNA acts like a tRNA, entering the A-site of stalled ribosomes, displacing the stalled mRNA. The ribosome then switches to translate the ORF on the tmRNA; the nascent peptide is terminated with the 'tag peptide' encoded by the tmRNA and targeted for degradation. The ribosome is freed to recommence translation, which seems to be the essential function of trans-translation. The chain is SsrA-binding protein from Treponema pallidum (strain Nichols).